The chain runs to 496 residues: Galactose-1-phosphate uridylyltransferase (496 aa).

This sequence belongs to the galactose-1-phosphate uridylyltransferase type 2 family.

The protein localises to the cytoplasm. The enzyme catalyses alpha-D-galactose 1-phosphate + UDP-alpha-D-glucose = alpha-D-glucose 1-phosphate + UDP-alpha-D-galactose. It participates in carbohydrate metabolism; galactose metabolism. The protein is Galactose-1-phosphate uridylyltransferase of Staphylococcus saprophyticus subsp. saprophyticus (strain ATCC 15305 / DSM 20229 / NCIMB 8711 / NCTC 7292 / S-41).